A 432-amino-acid chain; its full sequence is uncharacterized protein (432 aa).

12 consecutive transmembrane segments (helical) span residues 35–55, 60–80, 112–132, 144–164, 185–205, 209–229, 242–262, 274–294, 313–333, 359–379, 384–404, and 408–428; these read VARV…VIYL, LPPA…IATG, VAGM…PLWS, VGLL…LGAL, LAVA…LWAA, AVAW…ASLL, AHSI…PVLL, GAVI…LSAM, LIAP…AAGL, AAAV…AAAL, LLGW…PMPL, and TVIA…AALA.

This sequence to M.tuberculosis Rv3630 and M.bovis Mb3654.

It is found in the cell membrane. This is an uncharacterized protein from Mycobacterium tuberculosis (strain CDC 1551 / Oshkosh).